We begin with the raw amino-acid sequence, 517 residues long: MHDSFLSANGGFVVSKKTPHGLRLKHLGIKTYHEAIIYMREDCHVCHSEGFEVQTRIQVTLGSRSIIATLNVVTSELLQPGEAGLSDYAWESLHAKEGDEIQVSHPKPLESLSYVHAKIYGNELSFEQMKVIIDDVLSGRLSDVQISAFLAASGAGRLTRTEVMKLTKAMIDSGDRLSWPSPLVVDKHCVGGLPGNRTTLIVVPIVASFGLMIPKTSSRAITSPAGTADTMETLAPVHLSPQKMRQVVEQENGCIVWGGAVSLSPADDVLIRVERAIDLDSEGQLVASILSKKIATGATHAVIDIPVGPTAKVRNQSMALLLKQSLEEVGNELGLVVRALFTDGSQPVGHGIGPSLEARDVLAVLQGLPDAPNDLRERALTLAGAALECSSKVPPGLGKSIATQLLESGQAFKKFQAICEAQGGMRELTKARFTYPVVAAKEGKVSLIDNRKLAKIAKLAGAPKSKSAGIDLHAHVGESVEQGEPLFTIHSESLGELHYACDLLRDKQDIIILGENP.

This sequence belongs to the thymidine/pyrimidine-nucleoside phosphorylase family. Type 2 subfamily.

The catalysed reaction is thymidine + phosphate = 2-deoxy-alpha-D-ribose 1-phosphate + thymine. The sequence is that of Putative thymidine phosphorylase from Legionella pneumophila subsp. pneumophila (strain Philadelphia 1 / ATCC 33152 / DSM 7513).